The sequence spans 228 residues: Sec-independent protein translocase protein TatB (228 aa).

The helical transmembrane segment at 1-21 threads the bilayer; it reads MFDFGLGELVFVGIIALIVLG. Disordered regions lie at residues 126 to 162 and 196 to 228; these read LSDG…AETD and VPHT…VRKS. Basic residues predominate over residues 206 to 228; the sequence is AISRKRGLRPKHRAKPKLRVRKS.

This sequence belongs to the TatB family. The Tat system comprises two distinct complexes: a TatABC complex, containing multiple copies of TatA, TatB and TatC subunits, and a separate TatA complex, containing only TatA subunits. Substrates initially bind to the TatABC complex, which probably triggers association of the separate TatA complex to form the active translocon.

The protein localises to the cell inner membrane. In terms of biological role, part of the twin-arginine translocation (Tat) system that transports large folded proteins containing a characteristic twin-arginine motif in their signal peptide across membranes. Together with TatC, TatB is part of a receptor directly interacting with Tat signal peptides. TatB may form an oligomeric binding site that transiently accommodates folded Tat precursor proteins before their translocation. The polypeptide is Sec-independent protein translocase protein TatB (Neisseria meningitidis serogroup C / serotype 2a (strain ATCC 700532 / DSM 15464 / FAM18)).